A 2523-amino-acid polypeptide reads, in one-letter code: Non-reducing polyketide synthase Preu3 (2523 aa).

The interval 58–247 is N-terminal acylcarrier protein transacylase domain (SAT); sequence LQSLASERRA…KILAMTGSFH (190 aa). The 420-residue stretch at 373-792 folds into the Ketosynthase family 3 (KS3) domain; sequence DNAVAVVGMA…GSNGAMIVCQ (420 aa). Residues cysteine 539, histidine 674, and histidine 715 each act as for beta-ketoacyl synthase activity in the active site. The interval 900–1207 is malonyl-CoA:ACP transacylase (MAT) domain; sequence CFGGQVKAFV…KAFGSLADAT (308 aa). The active-site For acyl/malonyl transferase activity is serine 986. The tract at residues 1271–1398 is N-terminal hotdog fold; it reads HELLTFSSFE…GLVAFGGTVE (128 aa). The region spanning 1271-1573 is the PKS/mFAS DH domain; it reads HELLTFSSFE…FTRVTVPGLR (303 aa). A product template (PT) domain region spans residues 1301–1568; the sequence is LVKGHAVVAQ…ALGCRFTRVT (268 aa). Histidine 1305 serves as the catalytic Proton acceptor; for dehydratase activity. Positions 1421–1573 are C-terminal hotdog fold; sequence ECDALRGSAT…FTRVTVPGLR (153 aa). Aspartate 1483 serves as the catalytic Proton donor; for dehydratase activity. The disordered stretch occupies residues 1579-1601; it reads ANGDARAQERPSGSRISPSPLAP. In terms of domain architecture, Carrier spans 1639 to 1713; sequence VDYLAQVKAL…KLAEYLAKTL (75 aa). O-(pantetheine 4'-phosphoryl)serine is present on serine 1673. The segment at 1735 to 1757 is disordered; that stretch reads DAEQSSDESPYDSTDDSASGYGD. The span at 1738 to 1749 shows a compositional bias: acidic residues; the sequence is QSSDESPYDSTD. The interval 1986 to 2085 is methyltransferase (CMeT) domain; sequence LEIGGGTGGT…MRQLLSSEGF (100 aa). The tract at residues 2218-2520 is thioesterase (TE) domain; sequence LILHGGGHVL…RALEWLVEQC (303 aa).

Requires pantetheine 4'-phosphate as cofactor.

It catalyses the reaction 3 malonyl-CoA + acetyl-CoA + S-adenosyl-L-methionine + H(+) = 3-methylorsellinate + S-adenosyl-L-homocysteine + 3 CO2 + 4 CoA. Its function is as follows. Non-reducing polyketide synthase; part of a gene cluster that mediates the biosynthesis of a yet unidentified natural product. The first step in the pathway is performed by Preu3 that condenses one acetyl-CoA starter unit with 3 malonyl-CoA units. Preu3 also catalyzes one methylation step to produce 3-methylorsellinate, an intermediate that exhibits significant antibacterial activities against methicillin-resistant Staphylococcus aureus, multidrug-resistant Enterococcus faecalis, multidrug-resistant Enterococcus faecium, and multidrug-resistant Staphylococcus epidermidis. This Preussia isomera (Coprophilous fungus) protein is Non-reducing polyketide synthase Preu3.